The sequence spans 509 residues: Aspartyl/glutamyl-tRNA(Asn/Gln) amidotransferase subunit B (509 aa).

Belongs to the GatB/GatE family. GatB subfamily. As to quaternary structure, heterotrimer of A, B and C subunits.

It catalyses the reaction L-glutamyl-tRNA(Gln) + L-glutamine + ATP + H2O = L-glutaminyl-tRNA(Gln) + L-glutamate + ADP + phosphate + H(+). It carries out the reaction L-aspartyl-tRNA(Asn) + L-glutamine + ATP + H2O = L-asparaginyl-tRNA(Asn) + L-glutamate + ADP + phosphate + 2 H(+). Functionally, allows the formation of correctly charged Asn-tRNA(Asn) or Gln-tRNA(Gln) through the transamidation of misacylated Asp-tRNA(Asn) or Glu-tRNA(Gln) in organisms which lack either or both of asparaginyl-tRNA or glutaminyl-tRNA synthetases. The reaction takes place in the presence of glutamine and ATP through an activated phospho-Asp-tRNA(Asn) or phospho-Glu-tRNA(Gln). The polypeptide is Aspartyl/glutamyl-tRNA(Asn/Gln) amidotransferase subunit B (Mycobacterium leprae (strain Br4923)).